Reading from the N-terminus, the 521-residue chain is Zinc finger CCCH domain-containing protein 45 (521 aa).

3 disordered regions span residues 28 to 60, 142 to 185, and 296 to 319; these read TEDS…GFEG, TPAI…PLCS, and SRSF…ISPP. A compositionally biased stretch (polar residues) spans 34 to 43; it reads NVASQPQRHS. Residues 159 to 168 are compositionally biased toward low complexity; it reads EESSNSKVES. The span at 170 to 185 shows a compositional bias: polar residues; that stretch reads VTANKQGQLETKPLCS. A C3H1-type zinc finger spans residues 469 to 497; the sequence is NKIHQQCIYFGTANGCNMGDSCTYVHDRY.

The chain is Zinc finger CCCH domain-containing protein 45 from Arabidopsis thaliana (Mouse-ear cress).